The following is a 208-amino-acid chain: Nitrate/nitrite response regulator protein homolog (208 aa).

Residues K6–A122 enclose the Response regulatory domain. A 4-aspartylphosphate modification is found at D57. Positions E142 to N207 constitute an HTH luxR-type domain. The segment at residues N166–R185 is a DNA-binding region (H-T-H motif).

Could activate the expression of a formate dehydrogenase operon and could repress the transcription of the fumarate reductase (frdABCD) operon. In Haemophilus influenzae (strain ATCC 51907 / DSM 11121 / KW20 / Rd), this protein is Nitrate/nitrite response regulator protein homolog (narP).